The sequence spans 216 residues: PRA1 family protein B6 (216 aa).

Position 2 is an N-acetylalanine (Ala2). Transmembrane regions (helical) follow at residues 83–103, 105–125, 135–155, 159–179, and 186–206; these read LVAI…FLLA, LAAS…LVIG, LGIL…GSLL, LAVG…EDLF, and IGSG…AAAI.

The protein belongs to the PRA1 family. As to quaternary structure, interacts with PRA1B1, PRA1B2, PRA1B3, PRA1B4, PRA1B5 and PRA1E. Expressed in hypocotyls, roots, lateral roots, lateral root caps, columella cells, leaves and stomata.

The protein resides in the endoplasmic reticulum membrane. May be involved in both secretory and endocytic intracellular trafficking in the endosomal/prevacuolar compartments. In Arabidopsis thaliana (Mouse-ear cress), this protein is PRA1 family protein B6 (PRA1B6).